Reading from the N-terminus, the 126-residue chain is Histone H2B type F-S (126 aa).

Positions 1 to 12 (MPEPAKSAPAPK) are enriched in low complexity. The segment at 1–36 (MPEPAKSAPAPKKGSKKAVTKAQKKDGRKRKRSRKE) is disordered. Pro-2 is modified (N-acetylproline). At Glu-3 the chain carries ADP-ribosyl glutamic acid. Lys-6 bears the N6-(2-hydroxyisobutyryl)lysine; alternate mark. N6-(beta-hydroxybutyryl)lysine; alternate is present on Lys-6. Lys-6 bears the N6-acetyllysine; alternate mark. Lys-6 carries the N6-butyryllysine; alternate modification. Residue Lys-6 is modified to N6-crotonyllysine; alternate. The residue at position 6 (Lys-6) is an N6-lactoyllysine; alternate. A Glycyl lysine isopeptide (Lys-Gly) (interchain with G-Cter in SUMO2); alternate cross-link involves residue Lys-6. Ser-7 is modified (ADP-ribosylserine). At Lys-12 the chain carries N6-(beta-hydroxybutyryl)lysine; alternate. Residues Lys-12 and Lys-13 each carry the N6-acetyllysine; alternate modification. N6-crotonyllysine; alternate is present on residues Lys-12 and Lys-13. Lys-12 bears the N6-lactoyllysine; alternate mark. An N6-(2-hydroxyisobutyryl)lysine; alternate modification is found at Lys-13. Phosphoserine; by STK4/MST1 is present on Ser-15. N6-acetyllysine; alternate occurs at positions 16, 17, 21, and 24. N6-crotonyllysine; alternate is present on residues Lys-16, Lys-17, Lys-21, and Lys-24. Lys-16, Lys-17, Lys-21, and Lys-24 each carry N6-lactoyllysine; alternate. N6-(beta-hydroxybutyryl)lysine; alternate is present on residues Lys-17 and Lys-21. An N6-glutaryllysine; alternate modification is found at Lys-17. N6-(2-hydroxyisobutyryl)lysine; alternate occurs at positions 21 and 24. Lys-21 is modified (N6-butyryllysine; alternate). Lys-21 participates in a covalent cross-link: Glycyl lysine isopeptide (Lys-Gly) (interchain with G-Cter in SUMO2); alternate. Lys-25 carries the post-translational modification N6-(2-hydroxyisobutyryl)lysine. The residue at position 35 (Lys-35) is an N6-(2-hydroxyisobutyryl)lysine; alternate. Lys-35 is subject to N6-(beta-hydroxybutyryl)lysine; alternate. Lys-35 is subject to N6-crotonyllysine; alternate. At Lys-35 the chain carries N6-glutaryllysine; alternate. Position 35 is an N6-succinyllysine; alternate (Lys-35). A Glycyl lysine isopeptide (Lys-Gly) (interchain with G-Cter in ubiquitin); alternate cross-link involves residue Lys-35. The residue at position 36 (Glu-36) is a PolyADP-ribosyl glutamic acid. Ser-37 is modified (phosphoserine; by AMPK). An N6-(2-hydroxyisobutyryl)lysine; alternate mark is found at Lys-44, Lys-47, and Lys-58. Lys-44 carries the N6-lactoyllysine; alternate modification. 2 positions are modified to N6-glutaryllysine; alternate: Lys-44 and Lys-47. At Lys-47 the chain carries N6-methyllysine; alternate. Lys-58 carries the post-translational modification N6,N6-dimethyllysine; alternate. Dimethylated arginine is present on Arg-80. Lys-86 is subject to N6-(2-hydroxyisobutyryl)lysine; alternate. Position 86 is an N6-(beta-hydroxybutyryl)lysine; alternate (Lys-86). The residue at position 86 (Lys-86) is an N6-acetyllysine; alternate. Lys-86 carries the N6-lactoyllysine; alternate modification. The residue at position 86 (Lys-86) is an N6,N6,N6-trimethyllysine; alternate. An omega-N-methylarginine mark is found at Arg-87 and Arg-93. An N6-(2-hydroxyisobutyryl)lysine; alternate modification is found at Lys-109. At Lys-109 the chain carries N6-lactoyllysine; alternate. An N6-glutaryllysine; alternate modification is found at Lys-109. The residue at position 109 (Lys-109) is an N6-methyllysine; alternate. A glycan (O-linked (GlcNAc) serine) is linked at Ser-113. The residue at position 116 (Thr-116) is a Phosphothreonine. An N6-(2-hydroxyisobutyryl)lysine; alternate mark is found at Lys-117 and Lys-121. An N6-(beta-hydroxybutyryl)lysine; alternate mark is found at Lys-117 and Lys-121. Residues Lys-117 and Lys-121 each carry the N6-lactoyllysine; alternate modification. Lys-117 and Lys-121 each carry N6-glutaryllysine; alternate. N6-succinyllysine; alternate occurs at positions 117 and 121. At Lys-117 the chain carries N6-malonyllysine; alternate. Lys-117 carries the N6-methylated lysine; alternate modification. Residue Lys-121 forms a Glycyl lysine isopeptide (Lys-Gly) (interchain with G-Cter in ubiquitin); alternate linkage.

Belongs to the histone H2B family. As to quaternary structure, the nucleosome is a histone octamer containing two molecules each of H2A, H2B, H3 and H4 assembled in one H3-H4 heterotetramer and two H2A-H2B heterodimers. The octamer wraps approximately 147 bp of DNA. Monoubiquitination at Lys-35 (H2BK34Ub) by the MSL1/MSL2 dimer is required for histone H3 'Lys-4' (H3K4me) and 'Lys-79' (H3K79me) methylation and transcription activation at specific gene loci, such as HOXA9 and MEIS1 loci. Similarly, monoubiquitination at Lys-121 (H2BK120Ub) by the RNF20/40 complex gives a specific tag for epigenetic transcriptional activation and is also prerequisite for histone H3 'Lys-4' and 'Lys-79' methylation. It also functions cooperatively with the FACT dimer to stimulate elongation by RNA polymerase II. H2BK120Ub also acts as a regulator of mRNA splicing: deubiquitination by USP49 is required for efficient cotranscriptional splicing of a large set of exons. In terms of processing, phosphorylation at Ser-37 (H2BS36ph) by AMPK in response to stress promotes transcription. Phosphorylated on Ser-15 (H2BS14ph) by STK4/MST1 during apoptosis; which facilitates apoptotic chromatin condensation. Also phosphorylated on Ser-15 in response to DNA double strand breaks (DSBs), and in correlation with somatic hypermutation and immunoglobulin class-switch recombination. Post-translationally, glcNAcylation at Ser-113 promotes monoubiquitination of Lys-121. It fluctuates in response to extracellular glucose, and associates with transcribed genes. ADP-ribosylated by PARP1 or PARP2 on Ser-7 (H2BS6ADPr) in response to DNA damage. H2BS6ADPr promotes recruitment of CHD1L. Mono-ADP-ribosylated on Glu-3 (H2BE2ADPr) by PARP3 in response to single-strand breaks. Poly ADP-ribosylation on Glu-36 (H2BE35ADPr) by PARP1 regulates adipogenesis: it inhibits phosphorylation at Ser-37 (H2BS36ph), thereby blocking expression of pro-adipogenetic genes. In terms of processing, crotonylation (Kcr) is specifically present in male germ cells and marks testis-specific genes in post-meiotic cells, including X-linked genes that escape sex chromosome inactivation in haploid cells. Crotonylation marks active promoters and enhancers and confers resistance to transcriptional repressors. It is also associated with post-meiotically activated genes on autosomes. Post-translationally, lactylated in macrophages by EP300/P300 by using lactoyl-CoA directly derived from endogenous or exogenous lactate, leading to stimulates gene transcription.

It localises to the nucleus. The protein localises to the chromosome. Functionally, core component of nucleosome. Nucleosomes wrap and compact DNA into chromatin, limiting DNA accessibility to the cellular machineries which require DNA as a template. Histones thereby play a central role in transcription regulation, DNA repair, DNA replication and chromosomal stability. DNA accessibility is regulated via a complex set of post-translational modifications of histones, also called histone code, and nucleosome remodeling. Has broad antibacterial activity. May contribute to the formation of the functional antimicrobial barrier of the colonic epithelium, and to the bactericidal activity of amniotic fluid. The polypeptide is Histone H2B type F-S (Homo sapiens (Human)).